Here is a 412-residue protein sequence, read N- to C-terminus: Homoserine dehydrogenase (412 aa).

NADP(+)-binding positions include 9–16 and Lys-105; that span reads LGIGTVGG. Glu-190 contacts substrate. Residue Lys-205 is the Proton donor of the active site. One can recognise an ACT domain in the interval 330-407; it reads YLRLRAVDKP…ISGKVTRLRM (78 aa).

It belongs to the homoserine dehydrogenase family.

The catalysed reaction is L-homoserine + NADP(+) = L-aspartate 4-semialdehyde + NADPH + H(+). It carries out the reaction L-homoserine + NAD(+) = L-aspartate 4-semialdehyde + NADH + H(+). The protein operates within amino-acid biosynthesis; L-methionine biosynthesis via de novo pathway; L-homoserine from L-aspartate: step 3/3. Its pathway is amino-acid biosynthesis; L-threonine biosynthesis; L-threonine from L-aspartate: step 3/5. This chain is Homoserine dehydrogenase (hom), found in Methylobacillus glycogenes.